The following is a 55-amino-acid chain: Large ribosomal subunit protein bL32c (55 aa).

The protein belongs to the bacterial ribosomal protein bL32 family.

It localises to the plastid. It is found in the chloroplast. This Atropa belladonna (Belladonna) protein is Large ribosomal subunit protein bL32c.